Here is a 409-residue protein sequence, read N- to C-terminus: MKAEILCVGTELLLGDIVNTNAQYISKELANIGIEVYHHSVIGDNENRLLKELERAFNYCDLVITTGGLGPTKDDLTKESVAKFFQEDLVLHEKSLKQIEKRLLCFNKSMTESNRKQAYFPKNCEILENPNGTAPGFIIEKDNKIAIILPGPPYEMQPMFENKVIPYLEKLTNSTIKSKVLRITGIGESDVADLISDILERQTNPTVAPYAKQGETTLRITAKANSEEKAISLIVPIEKKIRQILGDNIYSSGETLLEEVVANILVKRNLTIATAESCTGGLLAGKLINFPGISSVFLEGAITYSNESKINRLNVKKETLEKYTAVSKEVALEMAEGIAKSAGTNIGISTTGVAGPGGGTYDKPIGLIYIGLYINGKTFVKELNYSGNRQFIRNITVTRALDFLRRNLK.

This sequence belongs to the CinA family.

The sequence is that of Putative competence-damage inducible protein from Clostridium botulinum (strain Kyoto / Type A2).